Here is a 62-residue protein sequence, read N- to C-terminus: Photosystem II reaction center protein Z (62 aa).

Transmembrane regions (helical) follow at residues 8-28 (LVFI…VTFA) and 41-61 (YTGA…NSFI).

Belongs to the PsbZ family. PSII is composed of 1 copy each of membrane proteins PsbA, PsbB, PsbC, PsbD, PsbE, PsbF, PsbH, PsbI, PsbJ, PsbK, PsbL, PsbM, PsbT, sbX, PsbY, PsbZ, Psb30/Ycf12, at least 3 peripheral proteins of the oxygen-evolving complex and a large number of cofactors. It forms dimeric complexes.

It localises to the plastid. It is found in the chloroplast thylakoid membrane. May control the interaction of photosystem II (PSII) cores with the light-harvesting antenna, regulates electron flow through the 2 photosystem reaction centers. PSII is a light-driven water plastoquinone oxidoreductase, using light energy to abstract electrons from H(2)O, generating a proton gradient subsequently used for ATP formation. The sequence is that of Photosystem II reaction center protein Z from Gracilaria tenuistipitata var. liui (Red alga).